We begin with the raw amino-acid sequence, 417 residues long: DNA primase DnaG (417 aa).

Residues Asp-171 to Ile-257 form the Toprim domain. Residues Glu-177, Asp-219, and Asp-221 each coordinate Mg(2+). The interval Val-278–Pro-325 is disordered. Residues Pro-279–Pro-289 show a composition bias toward basic and acidic residues.

This sequence belongs to the archaeal DnaG primase family. Forms a ternary complex with MCM helicase and DNA. The cofactor is Mg(2+).

The enzyme catalyses ssDNA + n NTP = ssDNA/pppN(pN)n-1 hybrid + (n-1) diphosphate.. RNA polymerase that catalyzes the synthesis of short RNA molecules used as primers for DNA polymerase during DNA replication. The polypeptide is DNA primase DnaG (Methanosphaerula palustris (strain ATCC BAA-1556 / DSM 19958 / E1-9c)).